Consider the following 316-residue polypeptide: Pantothenate kinase (316 aa).

95 to 102 (GSVAVGKS) contributes to the ATP binding site.

The protein belongs to the prokaryotic pantothenate kinase family.

It localises to the cytoplasm. The catalysed reaction is (R)-pantothenate + ATP = (R)-4'-phosphopantothenate + ADP + H(+). It participates in cofactor biosynthesis; coenzyme A biosynthesis; CoA from (R)-pantothenate: step 1/5. The polypeptide is Pantothenate kinase (Shewanella baltica (strain OS223)).